Reading from the N-terminus, the 395-residue chain is Elongation factor Tu (395 aa).

In terms of domain architecture, tr-type G spans 10–204; sequence KEHANIGTIG…AVDDYIPTPE (195 aa). The segment at 19–26 is G1; that stretch reads GHVDHGKT. Residue 19–26 coordinates GTP; that stretch reads GHVDHGKT. T26 contacts Mg(2+). The segment at 60–64 is G2; it reads GITIN. A G3 region spans residues 81 to 84; sequence DCPG. Residues 81 to 85 and 136 to 139 contribute to the GTP site; these read DCPGH and NKAD. The interval 136 to 139 is G4; sequence NKAD. The interval 174-176 is G5; that stretch reads SAL.

The protein belongs to the TRAFAC class translation factor GTPase superfamily. Classic translation factor GTPase family. EF-Tu/EF-1A subfamily. As to quaternary structure, monomer.

Its subcellular location is the cytoplasm. It catalyses the reaction GTP + H2O = GDP + phosphate + H(+). Functionally, GTP hydrolase that promotes the GTP-dependent binding of aminoacyl-tRNA to the A-site of ribosomes during protein biosynthesis. This Staphylococcus carnosus (strain TM300) protein is Elongation factor Tu.